The primary structure comprises 670 residues: Pescadillo homolog (670 aa).

Positions 292–321 (GANQAQAKVKEAESKRSLMEEELLKVRELF) form a coiled coil. The region spanning 316–402 (KVRELFRGLT…QMLPVTGYRI (87 aa)) is the BRCT domain. Residues 643-670 (RQRAEAKGKKLKEKKADNPYKKLPKWVQ) form a disordered region. A compositionally biased stretch (basic and acidic residues) spans 644–662 (QRAEAKGKKLKEKKADNPY).

It belongs to the pescadillo family.

The protein resides in the nucleus. The protein localises to the nucleolus. It localises to the nucleoplasm. Its function is as follows. Required for maturation of ribosomal RNAs and formation of the large ribosomal subunit. This Leishmania braziliensis protein is Pescadillo homolog.